The primary structure comprises 779 residues: Endonuclease MutS2 (779 aa).

328–335 (GPNTGGKT) provides a ligand contact to ATP. The region spanning 704 to 779 (LDLRGKRYEE…GSGATIVTLG (76 aa)) is the Smr domain.

Belongs to the DNA mismatch repair MutS family. MutS2 subfamily. As to quaternary structure, homodimer. Binds to stalled ribosomes, contacting rRNA.

In terms of biological role, endonuclease that is involved in the suppression of homologous recombination and thus may have a key role in the control of bacterial genetic diversity. Its function is as follows. Acts as a ribosome collision sensor, splitting the ribosome into its 2 subunits. Detects stalled/collided 70S ribosomes which it binds and splits by an ATP-hydrolysis driven conformational change. Acts upstream of the ribosome quality control system (RQC), a ribosome-associated complex that mediates the extraction of incompletely synthesized nascent chains from stalled ribosomes and their subsequent degradation. Probably generates substrates for RQC. The polypeptide is Endonuclease MutS2 (Streptococcus agalactiae serotype III (strain NEM316)).